Reading from the N-terminus, the 187-residue chain is Ribosome-recycling factor (187 aa).

The protein belongs to the RRF family.

It localises to the cytoplasm. Responsible for the release of ribosomes from messenger RNA at the termination of protein biosynthesis. May increase the efficiency of translation by recycling ribosomes from one round of translation to another. The protein is Ribosome-recycling factor of Orientia tsutsugamushi (strain Ikeda) (Rickettsia tsutsugamushi).